Here is an 897-residue protein sequence, read N- to C-terminus: Translation initiation factor IF-2 (897 aa).

Residues E52–A310 are disordered. Residues S68–V82 are compositionally biased toward polar residues. Composition is skewed to basic and acidic residues over residues E85 to V159 and E166 to K217. The segment covering G256–N272 has biased composition (basic residues). A compositionally biased stretch (basic and acidic residues) spans K273–A286. Residues P396 to K565 enclose the tr-type G domain. Residues G405–T412 are G1. GTP is bound at residue G405–T412. Residues G430–H434 are G2. Residues D451–G454 form a G3 region. GTP is bound by residues D451–H455 and N505–D508. The segment at N505–D508 is G4. The segment at S541–K543 is G5.

It belongs to the TRAFAC class translation factor GTPase superfamily. Classic translation factor GTPase family. IF-2 subfamily.

The protein localises to the cytoplasm. Functionally, one of the essential components for the initiation of protein synthesis. Protects formylmethionyl-tRNA from spontaneous hydrolysis and promotes its binding to the 30S ribosomal subunits. Also involved in the hydrolysis of GTP during the formation of the 70S ribosomal complex. This Enterobacter cloacae protein is Translation initiation factor IF-2 (infB).